A 66-amino-acid polypeptide reads, in one-letter code: Large ribosomal subunit protein uL29 (66 aa).

The protein belongs to the universal ribosomal protein uL29 family.

This chain is Large ribosomal subunit protein uL29, found in Thermosipho melanesiensis (strain DSM 12029 / CIP 104789 / BI429).